The primary structure comprises 377 residues: Cyclin-I (377 aa).

A disordered region spans residues 357–377; the sequence is DLSRQEGHASPCPPLQPVSVM. A compositionally biased stretch (pro residues) spans 367-377; sequence PCPPLQPVSVM.

This sequence belongs to the cyclin family. As to expression, highest levels in adult heart, brain and skeletal muscle. Lower levels in adult placenta, lung, kidney and pancreas. Also high levels in fetal brain and lower levels in fetal lung, liver and kidney. Also abundant in testis and thyroid.

It localises to the nucleus membrane. This is Cyclin-I from Homo sapiens (Human).